The following is a 221-amino-acid chain: Transcriptional regulator GfcR (221 aa).

A disordered region spans residues 35–59 (ASWLVERSQPTDNSQSSSANNPTEA). The span at 42-57 (SQPTDNSQSSSANNPT) shows a compositional bias: polar residues.

The protein belongs to the purine/pyrimidine phosphoribosyltransferase family. GfcR subfamily.

Its function is as follows. DNA-binding transcriptional regulator that functions as a regulator of central sugar catabolic pathways. The chain is Transcriptional regulator GfcR from Haloquadratum walsbyi (strain DSM 16790 / HBSQ001).